Consider the following 354-residue polypeptide: Uroporphyrinogen decarboxylase (354 aa).

Residues 27 to 31, aspartate 77, tyrosine 153, threonine 208, and histidine 326 contribute to the substrate site; that span reads RQAGR.

The protein belongs to the uroporphyrinogen decarboxylase family. In terms of assembly, homodimer.

The protein resides in the cytoplasm. The enzyme catalyses uroporphyrinogen III + 4 H(+) = coproporphyrinogen III + 4 CO2. Its pathway is porphyrin-containing compound metabolism; protoporphyrin-IX biosynthesis; coproporphyrinogen-III from 5-aminolevulinate: step 4/4. Functionally, catalyzes the decarboxylation of four acetate groups of uroporphyrinogen-III to yield coproporphyrinogen-III. In Neisseria meningitidis serogroup C (strain 053442), this protein is Uroporphyrinogen decarboxylase.